The chain runs to 78 residues: Defensin beta 136 (78 aa).

The signal sequence occupies residues 1 to 21; sequence MNLCLSSLLFFLVILLPSGKG. Intrachain disulfides connect Cys-33/Cys-60, Cys-40/Cys-54, and Cys-44/Cys-61.

It belongs to the beta-defensin family.

The protein resides in the secreted. Its function is as follows. Host defense peptide that exhibits antimicrobial and antifungal activity. Exhibits antimicrobial activity against E.coli, S.aureus and C.albicans (in vitro). Has high lipopolysaccharide (LPS)-binding affinity, and may thereby be involved in immunoregulation through LPS neutralization. In Pan troglodytes (Chimpanzee), this protein is Defensin beta 136 (DEFB136).